We begin with the raw amino-acid sequence, 132 residues long: Small ribosomal subunit protein uS8 (132 aa).

Belongs to the universal ribosomal protein uS8 family. Part of the 30S ribosomal subunit. Contacts proteins S5 and S12.

Functionally, one of the primary rRNA binding proteins, it binds directly to 16S rRNA central domain where it helps coordinate assembly of the platform of the 30S subunit. The protein is Small ribosomal subunit protein uS8 of Treponema pallidum (strain Nichols).